The sequence spans 372 residues: Dof zinc finger protein DOF5.6 (372 aa).

The segment at 73–127 adopts a Dof-type zinc-finger fold; sequence QKCPRCESTHTKFCYYNNYSLSQPRYFCKTCRRYWTKGGTLRNIPVGGGCRKNKK. 4 residues coordinate Zn(2+): cysteine 75, cysteine 78, cysteine 100, and cysteine 103. The tract at residues 117–146 is disordered; that stretch reads PVGGGCRKNKKPSSSNSSSSTSSGKKPSNI. Residues 128 to 145 are compositionally biased toward low complexity; sequence PSSSNSSSSTSSGKKPSN.

The PEAR proteins (e.g. DOF2.4, DOF5.1, DOF3.2, DOF1.1, DOF5.6 and DOF5.3) form a short-range concentration gradient that peaks at protophloem sieve elements (PSE). Preferentially expressed in the vasculature of all organs, including seedlings, roots, stems, buds, leaves, flowers and siliques, and particularly in the cambium, phloem and interfascicular parenchyma cells of inflorescence stems.

The protein resides in the nucleus. In terms of biological role, transcription factor that binds specifically to a 5'-AA[AG]G-3' consensus core sequence. Promotes expression. The PEAR proteins (e.g. DOF2.4, DOF5.1, DOF3.2, DOF1.1, DOF5.6 and DOF5.3) activate gene expression that promotes radial growth of protophloem sieve elements. Involved in the regulation of interfascicular cambium formation and vascular tissue development, particularly at a very early stage during inflorescence stem development; promotes both cambium activity and phloem specification, but prevents xylem specification. This chain is Dof zinc finger protein DOF5.6, found in Arabidopsis thaliana (Mouse-ear cress).